Reading from the N-terminus, the 475-residue chain is Dihydrolipoyl dehydrogenase (475 aa).

FAD-binding positions include 36–45, lysine 54, and glycine 117; that span reads ERYNTLGGVC. Cysteine 45 and cysteine 50 form a disulfide bridge. NAD(+) contacts are provided by residues 182–186, glutamate 205, valine 238, and 270–273; these read GGGII and AIGR. Positions 313 and 321 each coordinate FAD. Catalysis depends on histidine 445, which acts as the Proton acceptor.

This sequence belongs to the class-I pyridine nucleotide-disulfide oxidoreductase family. Requires FAD as cofactor.

It is found in the cytoplasm. The catalysed reaction is N(6)-[(R)-dihydrolipoyl]-L-lysyl-[protein] + NAD(+) = N(6)-[(R)-lipoyl]-L-lysyl-[protein] + NADH + H(+). Functionally, the branched-chain alpha-keto dehydrogenase complex catalyzes the overall conversion of alpha-keto acids to acyl-CoA and CO(2). It contains multiple copies of 3 enzymatic components: branched-chain alpha-keto acid decarboxylase (E1), lipoamide acyltransferase (E2) and lipoamide dehydrogenase (E3). In Vibrio cholerae serotype O1 (strain ATCC 39315 / El Tor Inaba N16961), this protein is Dihydrolipoyl dehydrogenase (lpd).